Reading from the N-terminus, the 362-residue chain is Phosphoserine aminotransferase (362 aa).

Arg-42 serves as a coordination point for L-glutamate. Pyridoxal 5'-phosphate-binding positions include 76–77 (AS), Trp-102, Thr-152, Asp-173, and Gln-196. At Lys-197 the chain carries N6-(pyridoxal phosphate)lysine. Pyridoxal 5'-phosphate is bound at residue 238-239 (NT).

This sequence belongs to the class-V pyridoxal-phosphate-dependent aminotransferase family. SerC subfamily. Homodimer. It depends on pyridoxal 5'-phosphate as a cofactor.

The protein resides in the cytoplasm. It catalyses the reaction O-phospho-L-serine + 2-oxoglutarate = 3-phosphooxypyruvate + L-glutamate. The catalysed reaction is 4-(phosphooxy)-L-threonine + 2-oxoglutarate = (R)-3-hydroxy-2-oxo-4-phosphooxybutanoate + L-glutamate. Its pathway is amino-acid biosynthesis; L-serine biosynthesis; L-serine from 3-phospho-D-glycerate: step 2/3. It functions in the pathway cofactor biosynthesis; pyridoxine 5'-phosphate biosynthesis; pyridoxine 5'-phosphate from D-erythrose 4-phosphate: step 3/5. In terms of biological role, catalyzes the reversible conversion of 3-phosphohydroxypyruvate to phosphoserine and of 3-hydroxy-2-oxo-4-phosphonooxybutanoate to phosphohydroxythreonine. This Chromobacterium violaceum (strain ATCC 12472 / DSM 30191 / JCM 1249 / CCUG 213 / NBRC 12614 / NCIMB 9131 / NCTC 9757 / MK) protein is Phosphoserine aminotransferase.